A 317-amino-acid polypeptide reads, in one-letter code: Large ribosomal subunit protein uL10 (317 aa).

Over residues 280–290 (SASAAPAAGGA) the composition is skewed to low complexity. Residues 280–317 (SASAAPAAGGATEKKEEAKKPESESEEEDDDMGFGLFD) are disordered. Residues 291–302 (TEKKEEAKKPES) show a composition bias toward basic and acidic residues. Serine 302 carries the post-translational modification Phosphoserine. Serine 304 carries the post-translational modification Phosphoserine; by CK1.

It belongs to the universal ribosomal protein uL10 family. P0 forms a pentameric complex by interaction with dimers of P1 and P2.

The protein resides in the cytoplasm. It is found in the nucleus. Functionally, ribosomal protein P0 is the functional equivalent of E.coli protein L10. This chain is Large ribosomal subunit protein uL10 (RpLP0), found in Drosophila melanogaster (Fruit fly).